We begin with the raw amino-acid sequence, 578 residues long: MACGFRRAIACQLSRVLNLPPENLITSISAVPISQKEEVADFQLSVDSLLEKDNDHSRPDIQVQAKRLAEKLRCDTVVSEISTGQRTVNFKINRELLTKTVLQQVIEDGSKYGLKSELFSGLPQKKIVVEFSSPNVAKKFHVGHLRSTIIGNFIANLKEALGHQVIRINYLGDWGMQFGLLGTGFQLFGYEEKLQSNPLQHLFEVYVQVNKEAADDKSVAKAAQEFFQRLELGDVQALSLWQKFRDLSIEEYIRVYKRLGVYFDEYSGESFYREKSQEVLKLLESKGLLLKTIKGTAVVDLSGNGDPSSICTVMRSDGTSLYATRDLAAAIDRMDKYNFDTMIYVTDKGQKKHFQQVFQMLKIMGYDWAERCQHVPFGVVQGMKTRRGDVTFLEDVLNEIQLRMLQNMASIKTTKELKNPQETAERVGLAALIIQDFKGLLLSDYKFSWDRVFQSRGDTGVFLQYTHARLHSLEETFGCGYLNDFNTACLQEPQSVSILQHLLRFDEVLYKSSQDFQPRHIVSYLLTLSHLAAVAHKTLQIKDSPPEVAGARLHLFKAVRSVLANGMKLLGITPVCRM.

Residues 1-16 constitute a mitochondrion transit peptide; it reads MACGFRRAIACQLSRV. Residues 133-135, histidine 144, tyrosine 322, aspartate 326, and glutamine 350 each bind L-arginine; that span reads SPN. The short motif at 133-144 is the 'HIGH' region element; sequence SPNVAKKFHVGH. Lysine 568 is modified (N6-acetyllysine).

This sequence belongs to the class-I aminoacyl-tRNA synthetase family.

It is found in the mitochondrion membrane. The catalysed reaction is tRNA(Arg) + L-arginine + ATP = L-arginyl-tRNA(Arg) + AMP + diphosphate. Functionally, catalyzes the attachment of arginine to tRNA(Arg) in a two-step reaction: arginine is first activated by ATP to form Arg-AMP and then transferred to the acceptor end of tRNA(Arg). The sequence is that of Probable arginine--tRNA ligase, mitochondrial (RARS2) from Homo sapiens (Human).